A 430-amino-acid polypeptide reads, in one-letter code: Adenylosuccinate synthetase (430 aa).

Residues 12–18 and 40–42 each bind GTP; these read GDEGKGK and GHT. Aspartate 13 acts as the Proton acceptor in catalysis. Mg(2+) is bound by residues aspartate 13 and glycine 40. IMP-binding positions include 13 to 16, 38 to 41, threonine 128, arginine 142, glutamine 223, threonine 238, and arginine 302; these read DEGK and NAGH. Histidine 41 serves as the catalytic Proton donor. 298 to 304 contacts substrate; the sequence is TTTGRPR. GTP contacts are provided by residues arginine 304, 330–332, and 412–414; these read SID and SVG.

Belongs to the adenylosuccinate synthetase family. In terms of assembly, homodimer. The cofactor is Mg(2+).

The protein localises to the cytoplasm. The catalysed reaction is IMP + L-aspartate + GTP = N(6)-(1,2-dicarboxyethyl)-AMP + GDP + phosphate + 2 H(+). It functions in the pathway purine metabolism; AMP biosynthesis via de novo pathway; AMP from IMP: step 1/2. In terms of biological role, plays an important role in the de novo pathway of purine nucleotide biosynthesis. Catalyzes the first committed step in the biosynthesis of AMP from IMP. This Streptococcus pyogenes serotype M12 (strain MGAS9429) protein is Adenylosuccinate synthetase.